A 160-amino-acid polypeptide reads, in one-letter code: Siroheme decarboxylase NirH subunit (160 aa).

It belongs to the Ahb/Nir family. As to quaternary structure, forms a complex composed of NirDL, NirG and NirH. All proteins are required for the total conversion of siroheme to didecarboxysiroheme.

It carries out the reaction siroheme + 2 H(+) = 12,18-didecarboxysiroheme + 2 CO2. It functions in the pathway porphyrin-containing compound metabolism. In terms of biological role, involved in heme d1 biosynthesis. Catalyzes the decarboxylation of siroheme into didecarboxysiroheme. Siroheme is probably decarboxylated to monodecarboxysiroheme, which is in turn decarboxylated to didecarboxysiroheme. The chain is Siroheme decarboxylase NirH subunit from Paracoccus pantotrophus (Thiosphaera pantotropha).